The sequence spans 420 residues: Argininosuccinate synthase (420 aa).

Residue 23-31 (AYSGGLDTS) coordinates ATP. Tyr-102 serves as a coordination point for L-citrulline. Gly-132 contributes to the ATP binding site. L-aspartate contacts are provided by Thr-134, Asn-138, and Asp-139. Asn-138 lines the L-citrulline pocket. The L-citrulline site is built by Arg-142, Ser-190, Glu-274, and Tyr-286.

The protein belongs to the argininosuccinate synthase family. Type 1 subfamily. Homotetramer.

The protein localises to the cytoplasm. The catalysed reaction is L-citrulline + L-aspartate + ATP = 2-(N(omega)-L-arginino)succinate + AMP + diphosphate + H(+). It participates in amino-acid biosynthesis; L-arginine biosynthesis; L-arginine from L-ornithine and carbamoyl phosphate: step 2/3. The protein is Argininosuccinate synthase of Renibacterium salmoninarum (strain ATCC 33209 / DSM 20767 / JCM 11484 / NBRC 15589 / NCIMB 2235).